The primary structure comprises 165 residues: LOB domain-containing protein 21 (165 aa).

One can recognise an LOB domain in the interval 10 to 111; that stretch reads SSCAACKLLK…HDLAVARTRL (102 aa).

Belongs to the LOB domain-containing protein family.

The polypeptide is LOB domain-containing protein 21 (LBD21) (Arabidopsis thaliana (Mouse-ear cress)).